Consider the following 251-residue polypeptide: Guanine nucleotide-binding protein subunit gamma 3 (251 aa).

Gly residues predominate over residues 1–10 (MSAPSGGGEG). The tract at residues 1–44 (MSAPSGGGEGGGKESAAGGVSSSSLAPSSLPPPRPKSPPEYPDL) is disordered. Residues 14–28 (ESAAGGVSSSSLAPS) are compositionally biased toward low complexity. Pro residues predominate over residues 29–41 (SLPPPRPKSPPEY). The region spanning 46–126 (GKRREAARVQ…LSLVSFCCCC (81 aa)) is the G protein gamma domain. Cys-248 bears the Cysteine methyl ester mark. Cys-248 carries the S-farnesyl cysteine lipid modification. A propeptide spans 249 to 251 (LAF) (removed in mature form).

In terms of assembly, g proteins are composed of 3 units, alpha, beta and gamma. Expressed in flowers and siliques.

In terms of biological role, guanine nucleotide-binding proteins (G proteins) are involved as a modulator or transducer in various transmembrane signaling systems. The beta and gamma chains are required for the GTPase activity, for replacement of GDP by GTP, and for G protein-effector interaction. The polypeptide is Guanine nucleotide-binding protein subunit gamma 3 (GG3) (Arabidopsis thaliana (Mouse-ear cress)).